The primary structure comprises 185 residues: UPF0397 protein AYWB_013 (185 aa).

5 helical membrane passes run 13–33 (IGLS…PVGF), 42–62 (AFLA…VGLI), 69–89 (FFLF…IGFI), 109–129 (IVYF…FFAP), and 148–168 (FLIV…LMTI).

Belongs to the UPF0397 family.

The protein resides in the cell membrane. The sequence is that of UPF0397 protein AYWB_013 from Aster yellows witches'-broom phytoplasma (strain AYWB).